A 221-amino-acid polypeptide reads, in one-letter code: Histidine biosynthesis bifunctional protein HisIE (221 aa).

The segment at 1-121 (MNITKIDWQK…KKQQFANWAW (121 aa)) is phosphoribosyl-AMP cyclohydrolase. The tract at residues 122–221 (FIKLEQHLKE…IGLHPEGGNK (100 aa)) is phosphoribosyl-ATP pyrophosphohydrolase.

The protein in the N-terminal section; belongs to the PRA-CH family. This sequence in the C-terminal section; belongs to the PRA-PH family.

It is found in the cytoplasm. It carries out the reaction 1-(5-phospho-beta-D-ribosyl)-ATP + H2O = 1-(5-phospho-beta-D-ribosyl)-5'-AMP + diphosphate + H(+). The catalysed reaction is 1-(5-phospho-beta-D-ribosyl)-5'-AMP + H2O = 1-(5-phospho-beta-D-ribosyl)-5-[(5-phospho-beta-D-ribosylamino)methylideneamino]imidazole-4-carboxamide. It functions in the pathway amino-acid biosynthesis; L-histidine biosynthesis; L-histidine from 5-phospho-alpha-D-ribose 1-diphosphate: step 2/9. It participates in amino-acid biosynthesis; L-histidine biosynthesis; L-histidine from 5-phospho-alpha-D-ribose 1-diphosphate: step 3/9. The chain is Histidine biosynthesis bifunctional protein HisIE (hisI) from Haemophilus influenzae (strain ATCC 51907 / DSM 11121 / KW20 / Rd).